The following is a 341-amino-acid chain: Putative gustatory receptor 9a (341 aa).

Residue methionine 1 is a topological domain, cytoplasmic. The chain crosses the membrane as a helical span at residues 2 to 22; the sequence is SLWLEHFLTGYFQLCGLVCGW. At 23 to 30 the chain is on the extracellular side; the sequence is SGSRLGRL. The chain crosses the membrane as a helical span at residues 31–51; that stretch reads LSSTFLVLILIELVGEIETYF. Residues 52 to 68 are Cytoplasmic-facing; sequence TEENPDNESVPAYFAKV. A helical transmembrane segment spans residues 69-89; it reads IMGVNMAYKMIHAWIALSALF. Over 90–113 the chain is Extracellular; the sequence is ECRRFRYLLEELPPVKATSFIYRH. A helical transmembrane segment spans residues 114-134; the sequence is LILEIILFACNAFLVLSEYTI. At 135–202 the chain is on the cytoplasmic side; sequence RGIYLENLRY…LAKVTRSLSH (68 aa). Residues 203-223 traverse the membrane as a helical segment; it reads LFGLSLLLLNVLCLGDWIIVC. Residues 224–233 are Extracellular-facing; the sequence is NVYFMVAYLQ. A helical transmembrane segment spans residues 234 to 254; sequence VLPATLFLFGQVMFVVCPTLI. The Cytoplasmic segment spans residues 255–318; the sequence is KIWSICAASH…GIYHLNLQTL (64 aa). A helical membrane pass occupies residues 319–339; it reads AGMFFFILEALVIFLQFVSLV. The Extracellular portion of the chain corresponds to 340–341; sequence RT.

This sequence belongs to the insect chemoreceptor superfamily. Gustatory receptor (GR) family. Gr2a subfamily. In terms of tissue distribution, expressed in neurons of the terminal external chemosensory organ of larvae.

Its subcellular location is the cell membrane. Its function is as follows. Probable gustatory receptor which mediates acceptance or avoidance behavior, depending on its substrates. The protein is Putative gustatory receptor 9a (Gr9a) of Drosophila melanogaster (Fruit fly).